The following is a 266-amino-acid chain: Thymidylate synthase (266 aa).

Arg-24 contributes to the dUMP binding site. Residue His-54 participates in (6R)-5,10-methylene-5,6,7,8-tetrahydrofolate binding. A dUMP-binding site is contributed by 129 to 130; that stretch reads RR. Cys-149 (nucleophile) is an active-site residue. Residues 169–172, Asn-180, and 210–212 each bind dUMP; these read RSAD and HIY. Position 172 (Asp-172) interacts with (6R)-5,10-methylene-5,6,7,8-tetrahydrofolate. Ala-265 provides a ligand contact to (6R)-5,10-methylene-5,6,7,8-tetrahydrofolate.

It belongs to the thymidylate synthase family. Bacterial-type ThyA subfamily. In terms of assembly, homodimer.

Its subcellular location is the cytoplasm. The enzyme catalyses dUMP + (6R)-5,10-methylene-5,6,7,8-tetrahydrofolate = 7,8-dihydrofolate + dTMP. Its pathway is pyrimidine metabolism; dTTP biosynthesis. Catalyzes the reductive methylation of 2'-deoxyuridine-5'-monophosphate (dUMP) to 2'-deoxythymidine-5'-monophosphate (dTMP) while utilizing 5,10-methylenetetrahydrofolate (mTHF) as the methyl donor and reductant in the reaction, yielding dihydrofolate (DHF) as a by-product. This enzymatic reaction provides an intracellular de novo source of dTMP, an essential precursor for DNA biosynthesis. The sequence is that of Thymidylate synthase from Mycobacterium bovis (strain ATCC BAA-935 / AF2122/97).